The sequence spans 43 residues: Protein PsbN (43 aa).

A helical transmembrane segment spans residues threonine 5–phenylalanine 27.

Belongs to the PsbN family.

The protein localises to the plastid. The protein resides in the chloroplast thylakoid membrane. May play a role in photosystem I and II biogenesis. This Calycanthus floridus (Eastern sweetshrub) protein is Protein PsbN.